The following is a 548-amino-acid chain: Esterase-5A (548 aa).

A signal peptide spans M1–G21. An intrachain disulfide couples C87 to C106. Residues N95 and N116 are each glycosylated (N-linked (GlcNAc...) asparagine). S210 functions as the Acyl-ester intermediate in the catalytic mechanism. C262 and C274 are disulfide-bonded. N-linked (GlcNAc...) asparagine glycosylation occurs at N479. A disulfide bond links C518 and C539.

This sequence belongs to the type-B carboxylesterase/lipase family.

It localises to the secreted. The catalysed reaction is a carboxylic ester + H2O = an alcohol + a carboxylate + H(+). This is Esterase-5A (Est-5A) from Drosophila pseudoobscura pseudoobscura (Fruit fly).